We begin with the raw amino-acid sequence, 169 residues long: Phosphopantetheine adenylyltransferase (169 aa).

Residue T14 participates in substrate binding. Residues 14 to 15 (TF) and H22 contribute to the ATP site. Positions 46, 78, and 92 each coordinate substrate. Residues 93-95 (GLR), E103, and 128-134 (HSFISSS) contribute to the ATP site.

Belongs to the bacterial CoaD family. As to quaternary structure, homohexamer. Mg(2+) serves as cofactor.

It localises to the cytoplasm. It catalyses the reaction (R)-4'-phosphopantetheine + ATP + H(+) = 3'-dephospho-CoA + diphosphate. The protein operates within cofactor biosynthesis; coenzyme A biosynthesis; CoA from (R)-pantothenate: step 4/5. Reversibly transfers an adenylyl group from ATP to 4'-phosphopantetheine, yielding dephospho-CoA (dPCoA) and pyrophosphate. The sequence is that of Phosphopantetheine adenylyltransferase from Stenotrophomonas maltophilia (strain R551-3).